Here is a 160-residue protein sequence, read N- to C-terminus: Serine-protein kinase RsbW (160 aa).

The protein belongs to the anti-sigma-factor family.

It catalyses the reaction L-seryl-[protein] + ATP = O-phospho-L-seryl-[protein] + ADP + H(+). The enzyme catalyses L-threonyl-[protein] + ATP = O-phospho-L-threonyl-[protein] + ADP + H(+). Negative regulator of sigma-B activity. Phosphorylates and inactivates its specific antagonist protein, RsbV. Upon phosphorylation of RsbV, RsbW is released and binds to sigma-B, thereby blocking its ability to form an RNA polymerase holoenzyme (E-sigma-B). The sequence is that of Serine-protein kinase RsbW from Bacillus cereus (strain AH187).